A 29-amino-acid polypeptide reads, in one-letter code: Amelogenin-like protein (29 aa).

The residue at position 16 (Ser16) is a Phosphoserine.

Belongs to the amelogenin family.

It is found in the secreted. Its subcellular location is the extracellular space. The protein localises to the extracellular matrix. Its function is as follows. Tooth enamel proteins are produced in ameloblasts and play a role in biomineralization. This is Amelogenin-like protein (AMEL) from Oryctolagus cuniculus (Rabbit).